A 401-amino-acid chain; its full sequence is Tumor necrosis factor receptor superfamily member 11B (401 aa).

The first 21 residues, 1-21, serve as a signal peptide directing secretion; that stretch reads MNKWLCCALLVFLDIIEWTTQ. TNFR-Cys repeat units lie at residues 24–62, 65–105, 107–142, and 145–185; these read FPPK…KTLC, CPDY…NRVC, CEEG…NTVC, and CPDG…DNVC. Cystine bridges form between C41–C54, C44–C62, C65–C80, C83–C97, C87–C105, C107–C118, C124–C142, and C145–C160. N-linked (GlcNAc...) asparagine glycosylation is present at N98. N-linked (GlcNAc...) asparagine glycans are attached at residues N165 and N178. C166 and C185 are disulfide-bonded. Death domains are found at residues 198 to 269 and 270 to 365; these read DVTL…MVKK and IIQD…THSL. An N-linked (GlcNAc...) asparagine glycan is attached at N289.

Homodimer. Interacts with TNFSF10 and TNFSF11.

It localises to the secreted. In terms of biological role, acts as a decoy receptor for TNFSF11/RANKL and thereby neutralizes its function in osteoclastogenesis. Inhibits the activation of osteoclasts and promotes osteoclast apoptosis in vitro. Bone homeostasis seems to depend on the local ratio between TNFSF11 and TNFRSF11B. May also play a role in preventing arterial calcification. May act as decoy receptor for TNFSF10/TRAIL and protect against apoptosis. TNFSF10/TRAIL binding blocks the inhibition of osteoclastogenesis. This chain is Tumor necrosis factor receptor superfamily member 11B (Tnfrsf11b), found in Rattus norvegicus (Rat).